The following is a 104-amino-acid chain: Large ribosomal subunit protein uL24 (104 aa).

The protein belongs to the universal ribosomal protein uL24 family. In terms of assembly, part of the 50S ribosomal subunit.

Its function is as follows. One of two assembly initiator proteins, it binds directly to the 5'-end of the 23S rRNA, where it nucleates assembly of the 50S subunit. Functionally, one of the proteins that surrounds the polypeptide exit tunnel on the outside of the subunit. This Clostridium perfringens (strain SM101 / Type A) protein is Large ribosomal subunit protein uL24.